A 518-amino-acid chain; its full sequence is MSILSVKDLSHGFGDRAIFNNVSFRLLKGEHVGLIGANGEGKSTFMNIITGKLEPDEGKVEWSKNVRVGYLDQHTVLEKGKSIRDVLKDAFHYLFAMEEEMNEIYNKMGEADPDELEKLLEEVGVIQDALTNNDFYVIDSKVEEIARGLGLSDIGLERDVTDLSGGQRTKVLLAKLLLEKPEILLLDEPTNYLDEQHIEWLKRYLQEYENAFILISHDIPFLNSVINLIYHVENQELTRYVGDYHQFMEVYEVKKQQLEAAYKKQQQEVAELKDFVARNKARVSTRNMAMSRQKKLDKMDMIELAAEKPKPEFHFKPARTSGKLIFETKDLVIGYDSPLSRPLNLRMERGQKIALYGANGIGKTTLLKSLLGEIQPLEGSVERGEHIYTGYFEQEVKETNNNTCIEEVWSEFPSYTQYEIRAALAKCGLTTKHIESRVSVLSGGEKAKVRLCKLINSETNLLVLDEPTNHLDADAKEELKRALKEYKGSILLISHEPDFYMDIATETWNCESWTTKVL.

ABC transporter domains follow at residues 4–260 (LSVK…QLEA) and 324–518 (LIFE…TKVL). Residues 36 to 43 (GANGEGKS) and 357 to 364 (GANGIGKT) each bind ATP.

The protein belongs to the ABC transporter superfamily.

This is an uncharacterized protein from Bacillus subtilis (strain 168).